A 361-amino-acid chain; its full sequence is Glutamine synthetase (361 aa).

The GS beta-grasp domain occupies 23-103 (CQAMYIWVDG…VLCETYKYNK (81 aa)). One can recognise a GS catalytic domain in the interval 110-361 (QRWKCMEVMT…LVRTICLNEQ (252 aa)). An ATP-binding site is contributed by glutamate 131. Glutamate 131, glutamate 133, and glutamate 200 together coordinate Mn(2+). Residue 200-205 (EFQVGP) coordinates ATP. 243–244 (DW) lines the L-glutamate pocket. Histidine 250 lines the Mn(2+) pocket. ATP contacts are provided by residues 252-254 (NFS), arginine 316, and arginine 321. Position 316 (arginine 316) interacts with L-glutamate. 333–335 (YLE) lines the ADP pocket. Glutamate 335 contacts Mn(2+). An L-glutamate-binding site is contributed by arginine 337.

The protein belongs to the glutamine synthetase family. Requires Mg(2+) as cofactor. It depends on Mn(2+) as a cofactor.

Its subcellular location is the cytoplasm. The protein resides in the cytosol. It is found in the microsome. It localises to the mitochondrion. The enzyme catalyses L-glutamate + NH4(+) + ATP = L-glutamine + ADP + phosphate + H(+). Glutamine synthetase that catalyzes the ATP-dependent conversion of glutamate and ammonia to glutamine. In Panulirus argus (Caribbean spiny lobster), this protein is Glutamine synthetase.